We begin with the raw amino-acid sequence, 362 residues long: NAC domain-containing protein 5 (362 aa).

An NAC domain is found at 3 to 151; sequence NPVGFRFRPT…TYTLCKVKFK (149 aa). Residues 107 to 157 mediate DNA binding; it reads IGEKRVLVFKNHGGSKSDWAMHEYHATFSSPNQIMTYTLCKVKFKGERREF. Positions 240–266 are disordered; that stretch reads DDRNNHTPQKPLTGVFSDHSTDGSDSD.

The protein localises to the nucleus. This is NAC domain-containing protein 5 (NAC005) from Arabidopsis thaliana (Mouse-ear cress).